Reading from the N-terminus, the 391-residue chain is Protein kinase ORF14 (391 aa).

Positions 109–391 (VPLRHTRGNI…ETLVDEFSKI (283 aa)) constitute a Protein kinase domain. An ATP-binding site is contributed by lysine 134. Aspartate 235 (proton acceptor) is an active-site residue.

It belongs to the protein kinase superfamily. Ser/Thr protein kinase family.

It carries out the reaction L-seryl-[protein] + ATP = O-phospho-L-seryl-[protein] + ADP + H(+). The enzyme catalyses L-threonyl-[protein] + ATP = O-phospho-L-threonyl-[protein] + ADP + H(+). This is Protein kinase ORF14 (ORF14) from Ictalurid herpesvirus 1 (strain Auburn) (IcHV-1).